The primary structure comprises 172 residues: Protein-export protein SecB (172 aa).

It belongs to the SecB family. Homotetramer, a dimer of dimers. One homotetramer interacts with 1 SecA dimer.

The protein resides in the cytoplasm. One of the proteins required for the normal export of preproteins out of the cell cytoplasm. It is a molecular chaperone that binds to a subset of precursor proteins, maintaining them in a translocation-competent state. It also specifically binds to its receptor SecA. In Ralstonia pickettii (strain 12J), this protein is Protein-export protein SecB.